We begin with the raw amino-acid sequence, 323 residues long: Aldo-keto reductase family 1 member C18 (323 aa).

Residues 20 to 24 (GFGTY) and D50 each bind NADP(+). Y55 serves as the catalytic Proton donor. Substrate is bound at residue H117. NADP(+) is bound by residues 166–167 (SN), Q190, 216–221 (YGALGT), and 270–280 (KSFNEERIREN).

This sequence belongs to the aldo/keto reductase family. Monomer.

It is found in the cytoplasm. The enzyme catalyses (17R,20S)-17,20-dihydroxypregn-4-en-3-one + NADP(+) = 17alpha-hydroxyprogesterone + NADPH + H(+). The catalysed reaction is (17R,20S)-17,20-dihydroxypregn-4-en-3-one + NAD(+) = 17alpha-hydroxyprogesterone + NADH + H(+). In terms of biological role, catalyzes the conversion of progesterone into 20-alpha-dihydroprogesterone (20 alpha-OHP). The chain is Aldo-keto reductase family 1 member C18 (Akr1c18) from Mus musculus (Mouse).